Here is a 514-residue protein sequence, read N- to C-terminus: MQQLNPSEISEIIKSRIAKLDTSTEARNEGTVVSVSDGIVRIHGLADVMFGEMIEFEGGIYGMALNLEQDSVGAVVLGDYLGLAEGQKVRCTGRILEVPTGPEMLGRVVDALGNPIDGKGPIEAKQTDAVEKVAPGVIWRREVNEPVQTGYKSIDAMVPIGRGQRELIIGDRQIGKTAVAVDAIINQKDSGIKCVYVAIGQKQSTIANVVRKLEEHGAMENTIIVAASASDPASMQFLAPFAGCTMGEYFRDRGEDALIVYDDLTKQAWAYRQISLLLRRPPGREAYPGDVFYLHSRLLERAAKVNEDYVEKFTNGEVKGKTGSLTALPIIETQGGDVSAFVPTNVISITDGQIFLETDLFNSGIRPAMNAGVSVSRVGGAAQTKIVKKLGGGIRLALAQYRELAAFAQFASDLDDSTREQLEHGQAVTELMKQKQYSPMSVAEMGVVLYAANEGYLKGMEVEKIGAFEAALLDYMNSEKKALMDKINEKGDYNGEIEAEIKESLDQFKATQTW.

Position 170–177 (170–177 (GDRQIGKT)) interacts with ATP.

The protein belongs to the ATPase alpha/beta chains family. In terms of assembly, F-type ATPases have 2 components, CF(1) - the catalytic core - and CF(0) - the membrane proton channel. CF(1) has five subunits: alpha(3), beta(3), gamma(1), delta(1), epsilon(1). CF(0) has three main subunits: a(1), b(2) and c(9-12). The alpha and beta chains form an alternating ring which encloses part of the gamma chain. CF(1) is attached to CF(0) by a central stalk formed by the gamma and epsilon chains, while a peripheral stalk is formed by the delta and b chains.

It localises to the cell inner membrane. The catalysed reaction is ATP + H2O + 4 H(+)(in) = ADP + phosphate + 5 H(+)(out). Functionally, produces ATP from ADP in the presence of a proton gradient across the membrane. The alpha chain is a regulatory subunit. The protein is ATP synthase subunit alpha of Alcanivorax borkumensis (strain ATCC 700651 / DSM 11573 / NCIMB 13689 / SK2).